The primary structure comprises 162 residues: Anaerobic nitrite reductase (162 aa).

Ser-2 bears the N-acetylserine mark. Positions 9–158 constitute a Globin domain; the sequence is VFTEEQEALV…LVAAIKFEMK (150 aa). The Homodimerization signature appears at 42 to 46; it reads EIAPS. The heme b site is built by Ser-52, Lys-66, His-70, Arg-100, and His-105. The short motif at 112 to 124 is the Homodimerization element; that stretch reads NEHFEVTRFALLE.

The protein belongs to the plant globin family. In terms of assembly, homodimer with distinct heme coordination in each subunits. Requires heme b as cofactor. In terms of tissue distribution, root nodules.

The protein resides in the cytoplasm. Its subcellular location is the nucleus. The catalysed reaction is Fe(III)-heme b-[protein] + nitric oxide + H2O = Fe(II)-heme b-[protein] + nitrite + 2 H(+). Its function is as follows. Phytoglobin that reduces nitrite to nitric oxide (NO) under anoxic conditions (e.g. during flooding or in waterlogged soil) and upon root nodulation. Required for general plant development and during nodulation, especially for the onset of symbiosis. Monitors nitric oxide (NO) levels during early phase of the nitrogen-fixing symbiosis and buffers oxygen in functioning nodules. May not function as an oxygen storage or transport protein. Has an unusually high affinity for O(2) through a hexacoordinate heme iron because of a very low dissociation constant. In Parasponia andersonii (Sponia andersonii), this protein is Anaerobic nitrite reductase.